We begin with the raw amino-acid sequence, 379 residues long: Chaperone protein DnaJ (379 aa).

One can recognise a J domain in the interval 5–70; that stretch reads DYYEVLGVGK…EKKAAYDQYG (66 aa). A CR-type zinc finger spans residues 139-217; it reads GHEAQIRVPH…CHGQGKLKSQ (79 aa). Positions 152, 155, 169, 172, 191, 194, 205, and 208 each coordinate Zn(2+). 4 CXXCXGXG motif repeats span residues 152–159, 169–176, 191–198, and 205–212; these read CDHCHGNG, CPTCHGAG, CPKCHGSG, and CTKCHGQG. The disordered stretch occupies residues 356–379; it reads VHEGGSRHSPQEQSWLDKVKSFFS.

Belongs to the DnaJ family. In terms of assembly, homodimer. Zn(2+) serves as cofactor.

The protein resides in the cytoplasm. Its function is as follows. Participates actively in the response to hyperosmotic and heat shock by preventing the aggregation of stress-denatured proteins and by disaggregating proteins, also in an autonomous, DnaK-independent fashion. Unfolded proteins bind initially to DnaJ; upon interaction with the DnaJ-bound protein, DnaK hydrolyzes its bound ATP, resulting in the formation of a stable complex. GrpE releases ADP from DnaK; ATP binding to DnaK triggers the release of the substrate protein, thus completing the reaction cycle. Several rounds of ATP-dependent interactions between DnaJ, DnaK and GrpE are required for fully efficient folding. Also involved, together with DnaK and GrpE, in the DNA replication of plasmids through activation of initiation proteins. The protein is Chaperone protein DnaJ of Cupriavidus pinatubonensis (strain JMP 134 / LMG 1197) (Cupriavidus necator (strain JMP 134)).